A 171-amino-acid chain; its full sequence is Nicotinamide-nucleotide adenylyltransferase (171 aa).

Belongs to the archaeal NMN adenylyltransferase family.

The protein resides in the cytoplasm. It carries out the reaction beta-nicotinamide D-ribonucleotide + ATP + H(+) = diphosphate + NAD(+). Its pathway is cofactor biosynthesis; NAD(+) biosynthesis; NAD(+) from nicotinamide D-ribonucleotide: step 1/1. The sequence is that of Nicotinamide-nucleotide adenylyltransferase from Methanococcus maripaludis (strain C5 / ATCC BAA-1333).